The following is an 88-amino-acid chain: Small ribosomal subunit protein uS15 (88 aa).

It belongs to the universal ribosomal protein uS15 family. In terms of assembly, part of the 30S ribosomal subunit. Forms a bridge to the 50S subunit in the 70S ribosome, contacting the 23S rRNA.

One of the primary rRNA binding proteins, it binds directly to 16S rRNA where it helps nucleate assembly of the platform of the 30S subunit by binding and bridging several RNA helices of the 16S rRNA. Its function is as follows. Forms an intersubunit bridge (bridge B4) with the 23S rRNA of the 50S subunit in the ribosome. In Polaromonas naphthalenivorans (strain CJ2), this protein is Small ribosomal subunit protein uS15.